Reading from the N-terminus, the 377-residue chain is Succinyl-diaminopimelate desuccinylase (377 aa).

Histidine 66 contacts Zn(2+). Aspartate 68 is a catalytic residue. Aspartate 99 provides a ligand contact to Zn(2+). Glutamate 133 (proton acceptor) is an active-site residue. The Zn(2+) site is built by glutamate 134, glutamate 162, and histidine 348.

The protein belongs to the peptidase M20A family. DapE subfamily. Homodimer. Zn(2+) is required as a cofactor. Requires Co(2+) as cofactor.

It catalyses the reaction N-succinyl-(2S,6S)-2,6-diaminopimelate + H2O = (2S,6S)-2,6-diaminopimelate + succinate. It participates in amino-acid biosynthesis; L-lysine biosynthesis via DAP pathway; LL-2,6-diaminopimelate from (S)-tetrahydrodipicolinate (succinylase route): step 3/3. Functionally, catalyzes the hydrolysis of N-succinyl-L,L-diaminopimelic acid (SDAP), forming succinate and LL-2,6-diaminopimelate (DAP), an intermediate involved in the bacterial biosynthesis of lysine and meso-diaminopimelic acid, an essential component of bacterial cell walls. This Xylella fastidiosa (strain M12) protein is Succinyl-diaminopimelate desuccinylase.